The primary structure comprises 601 residues: CDPK-related kinase 5 (601 aa).

Polar residues predominate over residues 1–19 (MGLCTSKPNSSNSDQTPAR). Disordered stretches follow at residues 1–55 (MGLC…KSPF) and 70–98 (KKTP…PPPS). A lipid anchor (N-myristoyl glycine) is attached at Gly2. A compositionally biased stretch (low complexity) spans 26 to 35 (SESVKPSSSS). The span at 36 to 48 (VNGEDQCVTTTNN) shows a compositional bias: polar residues. Residues 148-410 (YELGDEVGRG…AAQALSHPWI (263 aa)) enclose the Protein kinase domain. Residues 154-162 (VGRGHFGYT) and Lys180 each bind ATP. Asp276 functions as the Proton acceptor in the catalytic mechanism. At Ser316 the chain carries Phosphoserine. Residues 415 to 445 (DAKVPMDILVFKLMRAYLRSSSLRKAALRAL) form an autoinhibitory domain region. The interval 434–454 (SSSLRKAALRALSKTLTVDEL) is calmodulin binding (CaMBD). EF-hand domains follow at residues 452-488 (DELF…ATDA), 489-524 (MKDS…VHQL), 525-564 (EALD…GPSV), and 567-596 (HAVL…VSSR). Ca(2+) is bound by residues Ser467, Asn469, Thr471, Asn476, Arg508, Glu513, Asn546, Glu553, Asp578, and Lys580. Ser582 is subject to Phosphoserine.

Belongs to the protein kinase superfamily. Ser/Thr protein kinase family. CDPK subfamily. As to quaternary structure, binds calmodulin (CaM) in a calcium-dependent manner.

The protein resides in the membrane. The catalysed reaction is L-seryl-[protein] + ATP = O-phospho-L-seryl-[protein] + ADP + H(+). It carries out the reaction L-threonyl-[protein] + ATP = O-phospho-L-threonyl-[protein] + ADP + H(+). Activated by calcium and calmodulin. Autophosphorylation may play an important role in the regulation of the kinase activity. May play a role in signal transduction pathways that involve calcium as a second messenger. This chain is CDPK-related kinase 5 (CRK5), found in Arabidopsis thaliana (Mouse-ear cress).